The chain runs to 78 residues: Acyl carrier protein (78 aa).

Positions Met1–Val76 constitute a Carrier domain. At Ser36 the chain carries O-(pantetheine 4'-phosphoryl)serine.

Belongs to the acyl carrier protein (ACP) family. Post-translationally, 4'-phosphopantetheine is transferred from CoA to a specific serine of apo-ACP by AcpS. This modification is essential for activity because fatty acids are bound in thioester linkage to the sulfhydryl of the prosthetic group.

The protein localises to the cytoplasm. It participates in lipid metabolism; fatty acid biosynthesis. Its function is as follows. Carrier of the growing fatty acid chain in fatty acid biosynthesis. This is Acyl carrier protein from Aquifex aeolicus (strain VF5).